The sequence spans 906 residues: Coatomer subunit beta' (906 aa).

WD repeat units follow at residues 13 to 52 (ARSD…LVKT), 55 to 94 (VCDL…RVHM), 97 to 136 (AHSD…SCSQ), 140 to 180 (GHTH…PNFT), 183 to 224 (GHEK…CVQT), and 227 to 266 (GHAQ…LEST). Lys627 carries the post-translational modification N6-acetyllysine. The disordered stretch occupies residues 837–870 (EEGKDFQPSRSTAQQELDGKPASPTPVIVASHTA). Phosphoserine is present on Ser859. Thr861 carries the phosphothreonine modification. Positions 866 to 891 (ASHTANKEEKSLLELEVDLDNLELED) form a coiled coil.

This sequence belongs to the WD repeat COPB2 family. Oligomeric complex that consists of at least the alpha, beta, beta', gamma, delta, epsilon and zeta subunits. Probably interacts with PEX11A. Interacts with SCYL1. Interacts with JAGN1.

The protein resides in the cytoplasm. It is found in the cytosol. The protein localises to the golgi apparatus membrane. It localises to the cytoplasmic vesicle. Its subcellular location is the COPI-coated vesicle membrane. The coatomer is a cytosolic protein complex that binds to dilysine motifs and reversibly associates with Golgi non-clathrin-coated vesicles, which further mediate biosynthetic protein transport from the ER, via the Golgi up to the trans Golgi network. Coatomer complex is required for budding from Golgi membranes, and is essential for the retrograde Golgi-to-ER transport of dilysine-tagged proteins. In mammals, the coatomer can only be recruited by membranes associated to ADP-ribosylation factors (ARFs), which are small GTP-binding proteins; the complex also influences the Golgi structural integrity, as well as the processing, activity, and endocytic recycling of LDL receptors. In terms of biological role, this coatomer complex protein, essential for Golgi budding and vesicular trafficking, is a selective binding protein (RACK) for protein kinase C, epsilon type. It binds to Golgi membranes in a GTP-dependent manner. This chain is Coatomer subunit beta' (COPB2), found in Homo sapiens (Human).